The following is a 560-amino-acid chain: Excitatory amino acid transporter 5 (560 aa).

The Cytoplasmic portion of the chain corresponds to Met1–Arg16. A run of 3 helical transmembrane segments spans residues Asn17 to Leu37, Met60 to Leu80, and Ala94 to Ile114. Topologically, residues His115 to Thr216 are extracellular. The N-linked (GlcNAc...) asparagine glycan is linked to Asn191. 7 consecutive transmembrane segments (helical) span residues Ser217–Gly237, Ile260–Ile280, Val300–Thr320, Gly330–Ile350, Val372–Ile392, Ala414–Leu434, and Phe457–Cys477.

Belongs to the dicarboxylate/amino acid:cation symporter (DAACS) (TC 2.A.23) family. SLC1A7 subfamily. In terms of assembly, interacts with the PDZ domains of DLG4. In terms of tissue distribution, expressed primarily in retina. Detectable in liver, heart, muscle and brain.

Its subcellular location is the photoreceptor inner segment membrane. It is found in the synaptic cell membrane. It carries out the reaction K(+)(in) + L-glutamate(out) + 3 Na(+)(out) + H(+)(out) = K(+)(out) + L-glutamate(in) + 3 Na(+)(in) + H(+)(in). The catalysed reaction is K(+)(in) + L-aspartate(out) + 3 Na(+)(out) + H(+)(out) = K(+)(out) + L-aspartate(in) + 3 Na(+)(in) + H(+)(in). The enzyme catalyses D-aspartate(out) + K(+)(in) + 3 Na(+)(out) + H(+)(out) = D-aspartate(in) + K(+)(out) + 3 Na(+)(in) + H(+)(in). In terms of biological role, sodium-dependent, high-affinity amino acid transporter that mediates the uptake of L-glutamate and also L-aspartate and D-aspartate. Functions as a symporter that transports one amino acid molecule together with two or three Na(+) ions and one proton, in parallel with the counter-transport of one K(+) ion. Acts primarily as an inhibitory glutamate-gated chloride channel being a major inhibitory presynaptic receptor at mammalian rod bipolar cell axon terminals. Glutamate binding gates a large Cl(-) conductance that mediates inhibition, affecting visual processing in the retina. This is Excitatory amino acid transporter 5 from Homo sapiens (Human).